Consider the following 292-residue polypeptide: MPRSFLVKTHSSHRVPNYRRLETQREINGACSACGGLVVPLLPRDKEAPSVPGDLPQPWDRSSAVACISLPLLPRIEEALGASGLDALEVSEVDPRASRAAIVPLKDSLNHLNLPPLLVLPTRWSPTLGPDRHGAPEKLLGAERMPRAPGGFECFHCHKPYHTLAGLARHRQLHCHLQVGRVFTCKYCDKEYTSLGALKMHIRTHTLPCTCKICGKAFSRPWLLQGHVRTHTGEKPYACSHCSRAFADRSNLRAHLQTHSDAKKYRCRRCTKTFSRMSLLARHEESGCCPGP.

The interval 1–20 (MPRSFLVKTHSSHRVPNYRR) is SNAG domain. 4 consecutive C2H2-type zinc fingers follow at residues 152-174 (FECF…RQLH), 183-205 (FTCK…IRTH), 209-231 (CTCK…VRTH), and 237-259 (YACS…LQTH). Residues 265–287 (YRCRRCTKTFSRMSLLARHEESG) form a C2H2-type 5; degenerate zinc finger.

Belongs to the snail C2H2-type zinc-finger protein family.

It is found in the nucleus. Seems to inhibit myoblast differentiation. Transcriptional repressor of E-box-dependent transactivation of downstream myogenic bHLHs genes. Binds preferentially to the canonical E-box sequences 5'-CAGGTG-3' and 5'-CACCTG-3'. In Homo sapiens (Human), this protein is Zinc finger protein SNAI3 (SNAI3).